The chain runs to 256 residues: ATP synthase subunit a (256 aa).

Positions 1–7 (MLNLFIT) are cleaved as a propeptide — removed in mature form. 6 helical membrane passes run 33 to 53 (FTTF…LNLL), 92 to 112 (YFPL…ISMI), 122 to 142 (LIFI…IGLT), 148 to 168 (FFSL…LVLI), 188 to 208 (VLSG…LMSM), and 209 to 229 (SIIT…IVVL).

It belongs to the ATPase A chain family. F-type ATPases have 2 components, CF(1) - the catalytic core - and CF(0) - the membrane proton channel. CF(1) has five subunits: alpha(3), beta(3), gamma(1), delta(1), epsilon(1). CF(0) has three main subunits: a, b and c.

It localises to the mitochondrion inner membrane. Its function is as follows. Mitochondrial membrane ATP synthase (F(1)F(0) ATP synthase or Complex V) produces ATP from ADP in the presence of a proton gradient across the membrane which is generated by electron transport complexes of the respiratory chain. F-type ATPases consist of two structural domains, F(1) - containing the extramembraneous catalytic core and F(0) - containing the membrane proton channel, linked together by a central stalk and a peripheral stalk. During catalysis, ATP synthesis in the catalytic domain of F(1) is coupled via a rotary mechanism of the central stalk subunits to proton translocation. Key component of the proton channel; it may play a direct role in the translocation of protons across the membrane. The polypeptide is ATP synthase subunit a (ATP6) (Kluyveromyces lactis (strain ATCC 8585 / CBS 2359 / DSM 70799 / NBRC 1267 / NRRL Y-1140 / WM37) (Yeast)).